Reading from the N-terminus, the 138-residue chain is Putative pre-16S rRNA nuclease (138 aa).

It belongs to the YqgF nuclease family.

The protein resides in the cytoplasm. Its function is as follows. Could be a nuclease involved in processing of the 5'-end of pre-16S rRNA. In Caldicellulosiruptor saccharolyticus (strain ATCC 43494 / DSM 8903 / Tp8T 6331), this protein is Putative pre-16S rRNA nuclease.